The primary structure comprises 205 residues: SCO2-like protein RF_0960 (205 aa).

Cu cation contacts are provided by Cys-82, Cys-86, and His-172.

It belongs to the SCO1/2 family.

The polypeptide is SCO2-like protein RF_0960 (Rickettsia felis (strain ATCC VR-1525 / URRWXCal2) (Rickettsia azadi)).